A 157-amino-acid chain; its full sequence is ATP synthase subunit b (157 aa).

Residues 7–27 traverse the membrane as a helical segment; it reads LIAQLVVFFILAWVTMKFVWP.

This sequence belongs to the ATPase B chain family. As to quaternary structure, F-type ATPases have 2 components, F(1) - the catalytic core - and F(0) - the membrane proton channel. F(1) has five subunits: alpha(3), beta(3), gamma(1), delta(1), epsilon(1). F(0) has three main subunits: a(1), b(2) and c(10-14). The alpha and beta chains form an alternating ring which encloses part of the gamma chain. F(1) is attached to F(0) by a central stalk formed by the gamma and epsilon chains, while a peripheral stalk is formed by the delta and b chains.

It localises to the cell inner membrane. Functionally, f(1)F(0) ATP synthase produces ATP from ADP in the presence of a proton or sodium gradient. F-type ATPases consist of two structural domains, F(1) containing the extramembraneous catalytic core and F(0) containing the membrane proton channel, linked together by a central stalk and a peripheral stalk. During catalysis, ATP synthesis in the catalytic domain of F(1) is coupled via a rotary mechanism of the central stalk subunits to proton translocation. Component of the F(0) channel, it forms part of the peripheral stalk, linking F(1) to F(0). In Aromatoleum aromaticum (strain DSM 19018 / LMG 30748 / EbN1) (Azoarcus sp. (strain EbN1)), this protein is ATP synthase subunit b.